Here is a 266-residue protein sequence, read N- to C-terminus: MRVALKIAYDGTKFHGFQRQPNVRTIEGEILRALKDAGIEFENFKSASRTDRGVSARGNVIALSTEDDRIKNPMVLNSRMSDVWIWGIAEVPEDFHPRFWANTKVYRYYLPSLGMNIKKMKECSLLFLGTHDFSAFSRVDGRDTIRSIDRIEIWEKCNVVVVEIEGKSFLWEMVRRIVSALVLCSQGVLAEERIVEMLNGKFEKSRKVPPAPPEGLLLWDIKYENVEFQIDNASLKKFQREIVERFKLHASLSALYEDLILNEQKI.

The active-site Nucleophile is the Asp51. Residue Tyr106 coordinates substrate.

Belongs to the tRNA pseudouridine synthase TruA family.

It catalyses the reaction uridine(38/39/40) in tRNA = pseudouridine(38/39/40) in tRNA. Its function is as follows. Formation of pseudouridine at positions 38, 39 and 40 in the anticodon stem and loop of transfer RNAs. The sequence is that of tRNA pseudouridine synthase A from Pyrococcus furiosus (strain ATCC 43587 / DSM 3638 / JCM 8422 / Vc1).